The chain runs to 502 residues: Probable cytosol aminopeptidase (502 aa).

The Mn(2+) site is built by Lys258 and Asp263. Residue Lys270 is part of the active site. Mn(2+)-binding residues include Asp281, Asp340, and Glu342. Arg344 is a catalytic residue.

This sequence belongs to the peptidase M17 family. Mn(2+) is required as a cofactor.

The protein localises to the cytoplasm. It carries out the reaction Release of an N-terminal amino acid, Xaa-|-Yaa-, in which Xaa is preferably Leu, but may be other amino acids including Pro although not Arg or Lys, and Yaa may be Pro. Amino acid amides and methyl esters are also readily hydrolyzed, but rates on arylamides are exceedingly low.. The enzyme catalyses Release of an N-terminal amino acid, preferentially leucine, but not glutamic or aspartic acids.. Functionally, presumably involved in the processing and regular turnover of intracellular proteins. Catalyzes the removal of unsubstituted N-terminal amino acids from various peptides. The polypeptide is Probable cytosol aminopeptidase (Clavibacter michiganensis subsp. michiganensis (strain NCPPB 382)).